Consider the following 159-residue polypeptide: Large ribosomal subunit protein eL24 (159 aa).

The disordered stretch occupies residues 118-159; the sequence is ANKAVRAAKAAANKEKKASQPKTQQKTAKNVKTAAPRVGGKR. The span at 137 to 147 shows a compositional bias: polar residues; the sequence is QPKTQQKTAKN.

It belongs to the eukaryotic ribosomal protein eL24 family.

This chain is Large ribosomal subunit protein eL24, found in Caenorhabditis elegans.